We begin with the raw amino-acid sequence, 151 residues long: Putative pre-16S rRNA nuclease (151 aa).

It belongs to the YqgF nuclease family.

The protein resides in the cytoplasm. Could be a nuclease involved in processing of the 5'-end of pre-16S rRNA. This is Putative pre-16S rRNA nuclease from Neisseria meningitidis serogroup C (strain 053442).